The primary structure comprises 177 residues: NAD(P)H-quinone oxidoreductase subunit 6, chloroplastic (177 aa).

Helical transmembrane passes span 10–30 (VLLV…VLLT), 32–52 (PIYS…FYIL), 61–81 (AQLL…VMFM), 90–112 (FYLW…FSLI), and 152–172 (FYLP…GAIT).

Belongs to the complex I subunit 6 family. NDH is composed of at least 16 different subunits, 5 of which are encoded in the nucleus.

It localises to the plastid. It is found in the chloroplast thylakoid membrane. It catalyses the reaction a plastoquinone + NADH + (n+1) H(+)(in) = a plastoquinol + NAD(+) + n H(+)(out). The catalysed reaction is a plastoquinone + NADPH + (n+1) H(+)(in) = a plastoquinol + NADP(+) + n H(+)(out). Its function is as follows. NDH shuttles electrons from NAD(P)H:plastoquinone, via FMN and iron-sulfur (Fe-S) centers, to quinones in the photosynthetic chain and possibly in a chloroplast respiratory chain. The immediate electron acceptor for the enzyme in this species is believed to be plastoquinone. Couples the redox reaction to proton translocation, and thus conserves the redox energy in a proton gradient. This chain is NAD(P)H-quinone oxidoreductase subunit 6, chloroplastic (ndhG), found in Acorus calamus var. americanus (American sweet flag).